Reading from the N-terminus, the 1286-residue chain is Structural maintenance of chromosomes protein 4 (1286 aa).

The tract at residues 1–51 (MRRKGTKPSTACHQEEGPPPSQDGAHSDEEMEQPAGEAESAAPAKPPGEEL) is disordered. Ser21, Ser27, and Ser40 each carry phosphoserine. 111–118 (GPNGSGKS) serves as a coordination point for ATP. Ser141 is subject to Phosphoserine. Positions 270–589 (RRVEILNEHR…KVEEAKSSLA (320 aa)) form a coiled coil. Residues Lys379 and Lys677 each carry the N6-acetyllysine modification. The SMC hinge domain occupies 611–725 (PGIYGRLGDL…ANNLDQATRV (115 aa)). Coiled-coil stretches lie at residues 768–1018 (EISV…KLEQ) and 1068–1133 (ESIT…LNEF). At Ser980 the chain carries Phosphoserine.

It belongs to the SMC family. SMC4 subfamily. In terms of assembly, forms a heterodimer with SMC2. Component of the condensin complex, which contains the SMC2 and SMC4 heterodimer, and three non SMC subunits that probably regulate the complex: BRRN1/CAPH, CNAP1/CAPD2 and CAPG.

It localises to the nucleus. It is found in the cytoplasm. The protein localises to the chromosome. Central component of the condensin complex, a complex required for conversion of interphase chromatin into mitotic-like condense chromosomes. The condensin complex probably introduces positive supercoils into relaxed DNA in the presence of type I topoisomerases and converts nicked DNA into positive knotted forms in the presence of type II topoisomerases. The chain is Structural maintenance of chromosomes protein 4 (Smc4) from Mus musculus (Mouse).